The chain runs to 91 residues: Parbolysin P6 (91 aa).

Intrachain disulfides connect Cys-16–Cys-37, Cys-22–Cys-33, and Cys-47–Cys-60.

The protein belongs to the worm cytolysin family. Localized within the skin and proboscis and are most readily isolated from body mucus secretions.

It is found in the secreted. Its function is as follows. Cytolysin that shows hemolytic activity (on bovine erythrocytes, HC(50)=5.75 mg/ml). This hemolytic activity is completely inhibited by small unilamelar vesicles composed of PC/PG, PC/PI and PC/PS in 1:1 molar ratios (with at least 100 mg/ml concentration). The chain is Parbolysin P6 from Parborlasia corrugatus (Antarctic nemertean worm).